The primary structure comprises 143 residues: HTH-type transcriptional regulator BudR (143 aa).

One can recognise an HTH lysR-type domain in the interval 1-58 (MELRYLRYFVAVARERHFTRAAKALGISQPPLSQQIKRLEEEVGTPLFRRLTRGVELT). Positions 18–37 (FTRAAKALGISQPPLSQQIK) form a DNA-binding region, H-T-H motif.

It belongs to the LysR transcriptional regulatory family.

Regulator of the budABC operon for 2,3-butanediol synthesis. This is HTH-type transcriptional regulator BudR (budR) from Klebsiella aerogenes (Enterobacter aerogenes).